Reading from the N-terminus, the 286-residue chain is Protein NipSnap homolog 2 (286 aa).

The N-terminal 23 residues, 1–23 (MAARVLRARGAAWAGGLLQRAAP), are a transit peptide targeting the mitochondrion.

It belongs to the NipSnap family. As to quaternary structure, interacts with CALCOCO2/NDP52, NBR1, SQSTM1/p62, TAX1BP1 and WDFY3/ALFY. Interacts with ATG8 family proteins (MAP1LC3A, MAP1LC3B, MAP1LC3C, GABARAP, GABARAPL1 and GABARAPL2). Interacts with VDAC1. As to expression, widely expressed. Most abundant in heart and skeletal muscle.

The protein resides in the mitochondrion matrix. In terms of biological role, protein involved in mitophagy by facilitating recruitment of the autophagy machinery required for clearance of damaged mitochondria. Accumulates on the mitochondria surface in response to mitochondrial depolarization and acts as a 'eat me' signal by recruiting proteins involved in selective autophagy, such as autophagy receptors (CALCOCO2/NDP52, NBR1, SQSTM1/p62, TAX1BP1 and WDFY3/ALFY) and ATG8 family proteins (MAP1LC3A, MAP1LC3B, MAP1LC3C, GABARAP, GABARAPL1 and GABARAPL2). This Homo sapiens (Human) protein is Protein NipSnap homolog 2.